The sequence spans 516 residues: uncharacterized protein (516 aa).

The next 5 helical transmembrane spans lie at 10-27 (IRYP…GYWI), 32-54 (IGAF…GDFA), 64-83 (SFLF…PQFV), 95-117 (LLAV…ILGL), and 165-187 (AVCY…PALL). RCK C-terminal domains lie at 208–291 (KPGL…SRAE) and 296–376 (RELL…NIGV). 4 helical membrane passes run 386 to 408 (FVVL…FPVG), 412 to 430 (IALS…VGHL), 443 to 465 (GAIS…IHAG), and 480 to 502 (LLGG…HFVL).

This sequence belongs to the AAE transporter (TC 2.A.81) family.

It localises to the cell membrane. This is an uncharacterized protein from Bradyrhizobium diazoefficiens (strain JCM 10833 / BCRC 13528 / IAM 13628 / NBRC 14792 / USDA 110).